Consider the following 700-residue polypeptide: Receptor-type tyrosine-protein phosphatase epsilon (700 aa).

The first 19 residues, 1-19, serve as a signal peptide directing secretion; sequence MEPLCPLLLVGFSLPLARA. At 20–46 the chain is on the extracellular side; sequence LRGNETTADSNETTTTSGPPDPGASQP. Residues Asn-23 and Asn-30 are each glycosylated (N-linked (GlcNAc...) asparagine). Residues 47–69 form a helical membrane-spanning segment; sequence LLAWLLLPLLLLLLVLLLAAYFF. Residues 70–700 are Cytoplasmic-facing; that stretch reads RFRKQRKAVV…DIFSDYANFK (631 aa). 2 Tyrosine-protein phosphatase domains span residues 135–394 and 426–689; these read FREE…LLEY and LEEE…VQDF. Residues Asp-303, 335-341, and Gln-379 each bind substrate; that span reads CSAGVGR. The Phosphocysteine intermediate role is filled by Cys-335. The active-site Phosphocysteine intermediate is the Cys-630. At Tyr-696 the chain carries Phosphotyrosine.

Belongs to the protein-tyrosine phosphatase family. Receptor class 4 subfamily. As to quaternary structure, monomer. Isoform 2: Homodimer. Can form oligomers. Dimerization is increased by oxidative stress and decreased by EGFR. Isoform 2 interacts with GRB2. In terms of processing, a catalytically active cytoplasmic form (p65) is produced by proteolytic cleavage of either isoform 1, isoform 2 or isoform 3. Post-translationally, isoform 1 and isoform 2 are phosphorylated on tyrosine residues by tyrosine kinase Neu. Isoform 1 is glycosylated. In terms of tissue distribution, expressed in giant cell tumor (osteoclastoma rich in multinucleated osteoclastic cells).

The protein localises to the cell membrane. The protein resides in the cytoplasm. It carries out the reaction O-phospho-L-tyrosyl-[protein] + H2O = L-tyrosyl-[protein] + phosphate. Isoform 1 plays a critical role in signaling transduction pathways and phosphoprotein network topology in red blood cells. May play a role in osteoclast formation and function. Its function is as follows. Isoform 2 acts as a negative regulator of insulin receptor (IR) signaling in skeletal muscle. Regulates insulin-induced tyrosine phosphorylation of insulin receptor (IR) and insulin receptor substrate 1 (IRS-1), phosphorylation of protein kinase B and glycogen synthase kinase-3 and insulin induced stimulation of glucose uptake. Functionally, isoform 1 and isoform 2 act as a negative regulator of FceRI-mediated signal transduction leading to cytokine production and degranulation, most likely by acting at the level of SYK to affect downstream events such as phosphorylation of SLP76 and LAT and mobilization of Ca(2+). This Homo sapiens (Human) protein is Receptor-type tyrosine-protein phosphatase epsilon (PTPRE).